We begin with the raw amino-acid sequence, 24 residues long: Chaperonin GroEL (24 aa).

The protein belongs to the chaperonin (HSP60) family. In terms of assembly, forms a cylinder of 14 subunits composed of two heptameric rings stacked back-to-back. Interacts with the co-chaperonin GroES.

Its subcellular location is the cytoplasm. The enzyme catalyses ATP + H2O + a folded polypeptide = ADP + phosphate + an unfolded polypeptide.. In terms of biological role, together with its co-chaperonin GroES, plays an essential role in assisting protein folding. The GroEL-GroES system forms a nano-cage that allows encapsulation of the non-native substrate proteins and provides a physical environment optimized to promote and accelerate protein folding. The sequence is that of Chaperonin GroEL from Acinetobacter calcoaceticus.